The following is a 325-amino-acid chain: Adenine deaminase (325 aa).

Zn(2+) contacts are provided by histidine 11, histidine 13, and histidine 189. Glutamate 192 (proton donor) is an active-site residue. Aspartate 270 contacts Zn(2+). Aspartate 271 contributes to the substrate binding site.

This sequence belongs to the metallo-dependent hydrolases superfamily. Adenosine and AMP deaminases family. Adenine deaminase type 2 subfamily. Requires Zn(2+) as cofactor.

The enzyme catalyses adenine + H2O + H(+) = hypoxanthine + NH4(+). Its function is as follows. Catalyzes the hydrolytic deamination of adenine to hypoxanthine. Plays an important role in the purine salvage pathway and in nitrogen catabolism. In Agrobacterium fabrum (strain C58 / ATCC 33970) (Agrobacterium tumefaciens (strain C58)), this protein is Adenine deaminase.